Reading from the N-terminus, the 119-residue chain is Beta-2-microglobulin (119 aa).

Residues 1-20 (MSRSVALAVLALLSLSGLEA) form the signal peptide. In terms of domain architecture, Ig-like C1-type spans 25 to 114 (PKIQVYSRHP…VTLSGPRTVK (90 aa)). A disulfide bridge links Cys45 with Cys100.

This sequence belongs to the beta-2-microglobulin family. In terms of assembly, heterodimer of an alpha chain and a beta chain. Beta-2-microglobulin is the beta-chain of major histocompatibility complex class I molecules.

The protein localises to the secreted. Component of the class I major histocompatibility complex (MHC). Involved in the presentation of peptide antigens to the immune system. The protein is Beta-2-microglobulin (B2M) of Papio anubis (Olive baboon).